The following is a 392-amino-acid chain: Selenide, water dikinase 1 (392 aa).

S2 carries the post-translational modification N-acetylserine. C31 is a catalytic residue. ATP is bound by residues K32, 67 to 69 (GMD), D87, D110, and 161 to 164 (GGQT). D69 is a binding site for Mg(2+). D110 is a binding site for Mg(2+). Position 265 (D265) interacts with Mg(2+).

This sequence belongs to the selenophosphate synthase 1 family. Class II subfamily. In terms of assembly, homodimer. Heterodimer with isoform 3. Homodimer. Heterodimer with isoform 4. As to quaternary structure, homodimer. Heterodimer with isoform 1. In terms of assembly, homodimer. Heterodimer with isoform 2. Requires Mg(2+) as cofactor. In terms of tissue distribution, gradually expressed during the cell cycle until G2/M phase and then decreases. As to expression, gradually expressed during the cell cycle until S phase and then decreases.

The protein resides in the cell membrane. It localises to the nucleus membrane. Its subcellular location is the cytoplasm. The enzyme catalyses hydrogenselenide + ATP + H2O = selenophosphate + AMP + phosphate + 2 H(+). Its activity is regulated as follows. Activated by phosphate ions and by potassium ions. In terms of biological role, synthesizes selenophosphate from selenide and ATP. The protein is Selenide, water dikinase 1 (SEPHS1) of Homo sapiens (Human).